The chain runs to 430 residues: UPF0597 protein CV_1824 (430 aa).

It belongs to the UPF0597 family.

The chain is UPF0597 protein CV_1824 from Chromobacterium violaceum (strain ATCC 12472 / DSM 30191 / JCM 1249 / CCUG 213 / NBRC 12614 / NCIMB 9131 / NCTC 9757 / MK).